A 249-amino-acid polypeptide reads, in one-letter code: tRNA (guanine-N(1)-)-methyltransferase (249 aa).

S-adenosyl-L-methionine-binding positions include G116 and 136–141; that span reads IGDYIL.

It belongs to the RNA methyltransferase TrmD family. Homodimer.

The protein localises to the cytoplasm. The enzyme catalyses guanosine(37) in tRNA + S-adenosyl-L-methionine = N(1)-methylguanosine(37) in tRNA + S-adenosyl-L-homocysteine + H(+). In terms of biological role, specifically methylates guanosine-37 in various tRNAs. This is tRNA (guanine-N(1)-)-methyltransferase from Zymomonas mobilis subsp. mobilis (strain ATCC 31821 / ZM4 / CP4).